The sequence spans 81 residues: RNA-binding protein Hfq (81 aa).

The Sm domain maps to 9-68 (DPFLNVLRRERVPVFIYLINGIKLQGEIESFDKFVILLRNTVNQMIYKHAISTIVPSRVV).

Belongs to the Hfq family. Homohexamer.

Its function is as follows. RNA chaperone that binds small regulatory RNA (sRNAs) and mRNAs to facilitate mRNA translational regulation in response to envelope stress, environmental stress and changes in metabolite concentrations. Also binds with high specificity to tRNAs. This Blochmanniella pennsylvanica (strain BPEN) protein is RNA-binding protein Hfq.